A 614-amino-acid polypeptide reads, in one-letter code: Probable peptide-binding protein YejA (614 aa).

The N-terminal stretch at 1–27 (MILAPLKSRILIALAASALLIPAVASA) is a signal peptide.

Belongs to the bacterial solute-binding protein 5 family. In terms of assembly, the complex is composed of one ATP-binding protein (YejF), two transmembrane proteins (YejB and YejE) and a solute-binding protein (YejA).

The protein localises to the periplasm. In terms of biological role, probably part of the ABC transporter complex YejABEF, which is likely involved in broad-spectrum peptide import. The chain is Probable peptide-binding protein YejA from Agrobacterium fabrum (strain C58 / ATCC 33970) (Agrobacterium tumefaciens (strain C58)).